The following is a 253-amino-acid chain: MANLPTVLVTGASGRTGQIVYKKLKEGSDKFVAKGLVRSAQGKEKIGGEADVFIGDITDADSINPAFQGIDALVILTSAVPKMKPGFDPTKGGRPEFIFEDGQYPEQVDWIGQKNQIDAAKVAGVKHIVVVGSMGGTNPDHPLNKLGNGNILVWKRKAEQYLADSGTPYTIIRAGGLLDKEGGVRELLVGKDDELLQTDTKTVPRADVAEVCIQALLFEEAKNKAFDLGSKPEGTSTPTKDFKALFSQVTSRF.

Ala-2 is subject to N-acetylalanine.

The protein belongs to the NAD(P)-dependent epimerase/dehydratase family. In terms of assembly, homodimer.

This is an uncharacterized protein from Arabidopsis thaliana (Mouse-ear cress).